An 88-amino-acid polypeptide reads, in one-letter code: Transmembrane protein 069R (88 aa).

2 helical membrane-spanning segments follow: residues 30 to 50 and 67 to 87; these read ALWP…VFTA and VGVF…GDSF.

It is found in the host membrane. This chain is Transmembrane protein 069R, found in Frog virus 3 (isolate Goorha) (FV-3).